The sequence spans 347 residues: LRP2-binding protein (347 aa).

Residues 59–92 form a TPR repeat; it reads TLAYFLRGQLYFEEGWYEEALEQFEEIKEKDHQA. Sel1-like repeat units lie at residues 93 to 125, 133 to 168, 173 to 206, 207 to 242, 243 to 277, and 297 to 332; these read TYQLGVMYYDGLGTTLDAEKGVDYMKKILDSPC, FAAAYNLGRAYYEGKGVKRSNEEAERLWLIAADNGN, VKAQSMLGLYYSTKEPKELEKAFYWHSEACGNGN, LESQGALGLMYLYGQGIRQDTEAALQCLREAAERGN, VYAQGNLVEYYYKMKFFTKCVAFSKRIADYDEVHD, and AMASFYHARCLQLGLGITRDETTAKHYYSKACRLNP.

In terms of assembly, interacts with LRP2.

The protein resides in the cytoplasm. In terms of biological role, may act as an adapter that regulates LRP2 function. This chain is LRP2-binding protein (LRP2BP), found in Homo sapiens (Human).